The following is a 681-amino-acid chain: DNA ligase (681 aa).

NAD(+)-binding positions include 45 to 49 (DFDFD), 94 to 95 (SL), and glutamate 120. Lysine 122 serves as the catalytic N6-AMP-lysine intermediate. NAD(+) is bound by residues arginine 143, glutamate 177, lysine 289, and lysine 313. Residues cysteine 403, cysteine 406, cysteine 421, and cysteine 426 each coordinate Zn(2+). The BRCT domain maps to 593-681 (ADQQPFAGQS…SLKIDFKNLI (89 aa)).

Belongs to the NAD-dependent DNA ligase family. LigA subfamily. It depends on Mg(2+) as a cofactor. Requires Mn(2+) as cofactor.

It catalyses the reaction NAD(+) + (deoxyribonucleotide)n-3'-hydroxyl + 5'-phospho-(deoxyribonucleotide)m = (deoxyribonucleotide)n+m + AMP + beta-nicotinamide D-nucleotide.. Functionally, DNA ligase that catalyzes the formation of phosphodiester linkages between 5'-phosphoryl and 3'-hydroxyl groups in double-stranded DNA using NAD as a coenzyme and as the energy source for the reaction. It is essential for DNA replication and repair of damaged DNA. In Leptospira interrogans serogroup Icterohaemorrhagiae serovar copenhageni (strain Fiocruz L1-130), this protein is DNA ligase.